The following is a 345-amino-acid chain: Phenylalanine--tRNA ligase alpha subunit (345 aa).

Glu-266 contacts Mg(2+).

The protein belongs to the class-II aminoacyl-tRNA synthetase family. Phe-tRNA synthetase alpha subunit type 1 subfamily. Tetramer of two alpha and two beta subunits. The cofactor is Mg(2+).

It localises to the cytoplasm. It catalyses the reaction tRNA(Phe) + L-phenylalanine + ATP = L-phenylalanyl-tRNA(Phe) + AMP + diphosphate + H(+). In Methylibium petroleiphilum (strain ATCC BAA-1232 / LMG 22953 / PM1), this protein is Phenylalanine--tRNA ligase alpha subunit.